The sequence spans 618 residues: Dihydroxy-acid dehydratase (618 aa).

Position 81 (D81) interacts with Mg(2+). C122 provides a ligand contact to [2Fe-2S] cluster. Positions 123 and 124 each coordinate Mg(2+). K124 bears the N6-carboxylysine mark. [2Fe-2S] cluster is bound at residue C197. E493 contacts Mg(2+). The active-site Proton acceptor is the S519.

This sequence belongs to the IlvD/Edd family. In terms of assembly, homodimer. The cofactor is [2Fe-2S] cluster. Requires Mg(2+) as cofactor.

It catalyses the reaction (2R)-2,3-dihydroxy-3-methylbutanoate = 3-methyl-2-oxobutanoate + H2O. The enzyme catalyses (2R,3R)-2,3-dihydroxy-3-methylpentanoate = (S)-3-methyl-2-oxopentanoate + H2O. It functions in the pathway amino-acid biosynthesis; L-isoleucine biosynthesis; L-isoleucine from 2-oxobutanoate: step 3/4. It participates in amino-acid biosynthesis; L-valine biosynthesis; L-valine from pyruvate: step 3/4. Functions in the biosynthesis of branched-chain amino acids. Catalyzes the dehydration of (2R,3R)-2,3-dihydroxy-3-methylpentanoate (2,3-dihydroxy-3-methylvalerate) into 2-oxo-3-methylpentanoate (2-oxo-3-methylvalerate) and of (2R)-2,3-dihydroxy-3-methylbutanoate (2,3-dihydroxyisovalerate) into 2-oxo-3-methylbutanoate (2-oxoisovalerate), the penultimate precursor to L-isoleucine and L-valine, respectively. The chain is Dihydroxy-acid dehydratase from Bordetella avium (strain 197N).